Reading from the N-terminus, the 466-residue chain is Mitochondrial-processing peptidase subunit beta (466 aa).

H73 contacts Zn(2+). E76 serves as the catalytic Proton acceptor. Positions 77 and 153 each coordinate Zn(2+).

This sequence belongs to the peptidase M16 family. In terms of assembly, heterodimer of mppA (alpha) and mppB (beta) subunits, forming the mitochondrial processing protease (MPP) in which mppA is involved in substrate recognition and binding and mppB is the catalytic subunit. Requires Zn(2+) as cofactor.

Its subcellular location is the mitochondrion matrix. The catalysed reaction is Release of N-terminal transit peptides from precursor proteins imported into the mitochondrion, typically with Arg in position P2.. Its activity is regulated as follows. Binding to mppA is required for catalytic activity. Its function is as follows. Catalytic subunit of the essential mitochondrial processing protease (MPP), which cleaves the mitochondrial sequence off newly imported precursors proteins. Preferentially, cleaves after an arginine at position P2. This is Mitochondrial-processing peptidase subunit beta (mppB) from Lentinula edodes (Shiitake mushroom).